A 293-amino-acid chain; its full sequence is B1-hordein (293 aa).

Positions 1–19 (MKTFLIFALLAIAATSTIA) are cleaved as a signal peptide. The interval 20–90 (QQQPFPQQPI…PPFWQQKPFP (71 aa)) is disordered. The segment covering 25–81 (PQQPIPQQPQPYPQQPQPYPQQPFPPQQPFPQQPVPQQPQPYPQQPFPPQQPFPQQP) has biased composition (pro residues).

This sequence belongs to the gliadin/glutenin family. In terms of tissue distribution, developing endosperm.

Functionally, sulfur-rich seed storage protein. This Hordeum vulgare (Barley) protein is B1-hordein.